A 76-amino-acid chain; its full sequence is MTYFTSWDEFAKAAERLHSANPEKCRFVTKYNHTKGQLVLKLTDDVVCLQYSTNQLQDVKKLEKLSSTLLRGIVTQ.

It belongs to the SRP9 family. In terms of assembly, heterodimer with SRP14; binds RNA as heterodimer. Component of a signal recognition particle complex that consists of a 7SL RNA molecule of 300 nucleotides and six protein subunits: srpa-72, srpa-68, SRP54, F37F2.2/SRP19, F25G6.8/SRP14 and ZK512.4/SRP9.

The protein resides in the cytoplasm. Functionally, component of the signal recognition particle (SRP) complex, a ribonucleoprotein complex that mediates the cotranslational targeting of secretory and membrane proteins to the endoplasmic reticulum (ER). SRP9 together with SRP14 and the Alu portion of the SRP RNA, constitutes the elongation arrest domain of SRP. The complex of SRP9 and SRP14 is required for SRP RNA binding. This chain is Signal recognition particle 9 kDa protein, found in Caenorhabditis elegans.